Reading from the N-terminus, the 118-residue chain is Small ribosomal subunit protein uS13 (118 aa).

The segment at 91 to 118 is disordered; the sequence is HRHSLPVRGQRTKTNARTRKGPRKPIRK.

Belongs to the universal ribosomal protein uS13 family. As to quaternary structure, part of the 30S ribosomal subunit. Forms a loose heterodimer with protein S19. Forms two bridges to the 50S subunit in the 70S ribosome.

Located at the top of the head of the 30S subunit, it contacts several helices of the 16S rRNA. In the 70S ribosome it contacts the 23S rRNA (bridge B1a) and protein L5 of the 50S subunit (bridge B1b), connecting the 2 subunits; these bridges are implicated in subunit movement. Contacts the tRNAs in the A and P-sites. This chain is Small ribosomal subunit protein uS13, found in Hahella chejuensis (strain KCTC 2396).